The primary structure comprises 790 residues: MDLDIDQMEKKWLKYWEDNDIYTFIPSEREKVFTIDTPPPTVSGKMHMGHSFSYSHIDFIARYKRMRGYHVFFPWGFDDNGLATERYVEKETGIKPTDGNVEHFINLCREFSQASEKALIEGWKRMGMSCYFKDYYVTSSPESVKISQSMFLDLVKKNRVYRDLAPTIRCPTCKTSISQIEMKDEMLKSKLVYINFDVEGSKLTIATSRPELLGSCVALFVNNEDERYKNIIGREATVPLFGHKVPIMGDESIDKDFGTGAEMVCTFGDQNDLDLWKKYSLPLRISIDKDGKMNENAGPLNGLSINDGRKKIIELLKSEGFVVKEEDIKHSVNTHERCGTPVEIFIEKQWFIRYLDLKKDFIDSGRAVKWIPDYMRTRYENWVNGLKWDWCISRQRYYGVPFPVWYCSDCGNTVFADDKDLPVDPRLQPPSKRCDKCGSSNLVPERDVMDTWATSSLTPRIALSHFGLFDKYYPEDLRGQGHDIISFWAFTTIARSKIHDNTIPWLTLMISGNVFDMYGEKMSKSKGNIVDIYAITDKYGADALRFWASTVSQGEDIRVKEQDFVRGRRTVIKMYNANRLIDILRNGRPLKNVDEPKHPVNLWILTEESKVVKLVTDSMDNYEVSKARSALDVFFWNTFCDNYLEMIKAIVQAANEKNDLGTVDETIYTASKVMRDVVKMYAPIMPFITEEIYQSIEIEGKKKSVHIDCWPMENREYVEASEVRYVTSIIDKIRAAKSNAKVSVGTPVRKALIKCNASIAEKYRDMLSRMMRIGSIDIEDSDKLEVSVEP.

Residues 40 to 50 carry the 'HIGH' region motif; the sequence is PTVSGKMHMGH. The 'KMSKS' region signature appears at 521–525; the sequence is KMSKS. Residue Lys524 coordinates ATP.

This sequence belongs to the class-I aminoacyl-tRNA synthetase family. ValS type 2 subfamily.

It is found in the cytoplasm. It carries out the reaction tRNA(Val) + L-valine + ATP = L-valyl-tRNA(Val) + AMP + diphosphate. Functionally, catalyzes the attachment of valine to tRNA(Val). As ValRS can inadvertently accommodate and process structurally similar amino acids such as threonine, to avoid such errors, it has a 'posttransfer' editing activity that hydrolyzes mischarged Thr-tRNA(Val) in a tRNA-dependent manner. In Thermoplasma volcanium (strain ATCC 51530 / DSM 4299 / JCM 9571 / NBRC 15438 / GSS1), this protein is Valine--tRNA ligase.